The sequence spans 424 residues: Phosphomethylpyrimidine synthase (424 aa).

Substrate-binding positions include Asn66, Met95, Tyr124, His163, 185-187 (SRG), 226-229 (DGMR), and Glu265. Zn(2+) is bound at residue His269. Phe292 contacts substrate. His333 is a binding site for Zn(2+). Residues Cys408, Cys411, and Cys415 each contribute to the [4Fe-4S] cluster site.

This sequence belongs to the ThiC family. It depends on [4Fe-4S] cluster as a cofactor.

The catalysed reaction is 5-amino-1-(5-phospho-beta-D-ribosyl)imidazole + S-adenosyl-L-methionine = 4-amino-2-methyl-5-(phosphooxymethyl)pyrimidine + CO + 5'-deoxyadenosine + formate + L-methionine + 3 H(+). It functions in the pathway cofactor biosynthesis; thiamine diphosphate biosynthesis. Functionally, catalyzes the synthesis of the hydroxymethylpyrimidine phosphate (HMP-P) moiety of thiamine from aminoimidazole ribotide (AIR) in a radical S-adenosyl-L-methionine (SAM)-dependent reaction. This Thermotoga neapolitana (strain ATCC 49049 / DSM 4359 / NBRC 107923 / NS-E) protein is Phosphomethylpyrimidine synthase.